The chain runs to 123 residues: Large ribosomal subunit protein bL12 (123 aa).

This sequence belongs to the bacterial ribosomal protein bL12 family. Homodimer. Part of the ribosomal stalk of the 50S ribosomal subunit. Forms a multimeric L10(L12)X complex, where L10 forms an elongated spine to which 2 to 4 L12 dimers bind in a sequential fashion. Binds GTP-bound translation factors.

In terms of biological role, forms part of the ribosomal stalk which helps the ribosome interact with GTP-bound translation factors. Is thus essential for accurate translation. This Psychrobacter arcticus (strain DSM 17307 / VKM B-2377 / 273-4) protein is Large ribosomal subunit protein bL12.